The sequence spans 181 residues: Achaete-scute homolog 3 (181 aa).

Residues 93–106 (AFTRKRNERERQRV) form a basic motif region. The region spanning 93–145 (AFTRKRNERERQRVKCVNEGYAQLRHHLPEEYLEKRLSKVETLRAAIKYINYL) is the bHLH domain. Residues 107-145 (KCVNEGYAQLRHHLPEEYLEKRLSKVETLRAAIKYINYL) form a helix-loop-helix motif region.

In terms of assembly, efficient DNA binding requires dimerization with another bHLH protein. In terms of tissue distribution, widely expressed in fetal and adult tissues.

The protein localises to the nucleus. Functionally, transcriptional repressor. Inhibits myogenesis. Plays a role in progenitor cells which differentiate into ductal and acinar, but not myoepithelial, cell lineages in the salivary glands. Involved in the functions of the microvillar cells and Bowman's glands and probably, in a non-cell-autonomous manner, in the development or regeneration of a complete olfactory epithelium (OE). In Homo sapiens (Human), this protein is Achaete-scute homolog 3.